A 193-amino-acid chain; its full sequence is Large ribosomal subunit protein uL18 (193 aa).

This sequence belongs to the universal ribosomal protein uL18 family. Part of the 50S ribosomal subunit. Contacts the 5S and 23S rRNAs.

Its function is as follows. This is one of the proteins that bind and probably mediate the attachment of the 5S RNA into the large ribosomal subunit, where it forms part of the central protuberance. The protein is Large ribosomal subunit protein uL18 of Methanococcus maripaludis (strain C5 / ATCC BAA-1333).